The primary structure comprises 431 residues: Indole diterpene prenyltransferase nodD1 (431 aa).

F85–I86 serves as a coordination point for L-tryptophan. 6 residues coordinate substrate: R107, K194, R268, K270, Y272, and Y353.

It belongs to the tryptophan dimethylallyltransferase family.

Its pathway is secondary metabolite biosynthesis. Its function is as follows. Indole diterpene prenyltransferase; part of the gene cluster that mediates the biosynthesis of the indole diterpenes nodulisporic acids (NA). Nodulisporic acid A (NAA) and its chemically modified derivatives are of particular significance because of their highly potent insecticidal activity against blood-feeding arthropods and lack of observable adverse effects on mammals, in particular the tremogenicity associated with the paspaline-derived IDTs is not observed. The geranylgeranyl diphosphate (GGPP) synthase ggs1, localized outside of the cluster, is proposed to catalyze the first step in nodulisporic acid biosynthesis via conversion of farnesyl pyrophosphate and isopentyl pyrophosphate into geranylgeranyl pyrophosphate (GGPP). Condensation of indole-3-glycerol phosphate with GGPP by the prenyl transferase nodC then forms 3-geranylgeranylindole (3-GGI). Epoxidation by the FAD-dependent monooxygenase nodM leads to a single-epoxidized-GGI that is substrate of the terpene cyclase nodB for cyclization to yield emindole SB. The terminal methyl carbon, C28, of emindole SB is then oxidized by the cytochrome P450 monooxygenase nodW to produce nodulisporic acid F (NAF), the pentacyclic core of NAA. NAF is converted to nodulisporic acid E (NAE) via prenylation. This step is probably performed by one of the indole diterpene prenyltransferases nodD1 or nodD2. Several oxidation steps performed by the FAD-linked oxidoreductase nodO and one of the cytochrome P450 monooxygenase nodR, nodX or nodZ further convert NAE to nodulisporic acid D (NAD). NAD is substrate of cytochrome P450 monooxygenase nodJ to produce the precursor of nodulisporic acid C (NAC), converted to NAC by one of the indole diterpene prenyltransferases nodD1 or nodD2. The FAD-dependent monooxygenase nodY2 then oxidizes NAC to nodulisporic acid B (NAB). Finally NAB is converted to NAA by one of the cytochrome P450 monooxygenases nodR, nodX or nodZ. The polypeptide is Indole diterpene prenyltransferase nodD1 (Hypoxylon pulicicidum).